A 183-amino-acid chain; its full sequence is dTDP-4-dehydrorhamnose 3,5-epimerase (183 aa).

Residues Arg-24, Glu-29, 48–50 (QDN), and Arg-60 each bind substrate. His-63 (proton acceptor) is an active-site residue. Substrate is bound by residues Lys-73 and His-120. The Proton donor role is filled by Tyr-133. Positions 144 and 169 each coordinate substrate.

It belongs to the dTDP-4-dehydrorhamnose 3,5-epimerase family. As to quaternary structure, homodimer.

The enzyme catalyses dTDP-4-dehydro-6-deoxy-alpha-D-glucose = dTDP-4-dehydro-beta-L-rhamnose. Its pathway is carbohydrate biosynthesis; dTDP-L-rhamnose biosynthesis. The protein operates within bacterial outer membrane biogenesis; LPS O-antigen biosynthesis. In terms of biological role, catalyzes the epimerization of the C3' and C5'positions of dTDP-6-deoxy-D-xylo-4-hexulose, forming dTDP-6-deoxy-L-lyxo-4-hexulose. This chain is dTDP-4-dehydrorhamnose 3,5-epimerase, found in Salmonella typhimurium (strain LT2 / SGSC1412 / ATCC 700720).